We begin with the raw amino-acid sequence, 201 residues long: Orotate phosphoribosyltransferase (201 aa).

E113–S121 contacts 5-phospho-alpha-D-ribose 1-diphosphate. Orotate is bound by residues T117 and R145.

It belongs to the purine/pyrimidine phosphoribosyltransferase family. PyrE subfamily. As to quaternary structure, homodimer. It depends on Mg(2+) as a cofactor.

It carries out the reaction orotidine 5'-phosphate + diphosphate = orotate + 5-phospho-alpha-D-ribose 1-diphosphate. The protein operates within pyrimidine metabolism; UMP biosynthesis via de novo pathway; UMP from orotate: step 1/2. In terms of biological role, catalyzes the transfer of a ribosyl phosphate group from 5-phosphoribose 1-diphosphate to orotate, leading to the formation of orotidine monophosphate (OMP). This Helicobacter pylori (strain HPAG1) protein is Orotate phosphoribosyltransferase.